We begin with the raw amino-acid sequence, 336 residues long: Ephrin-B2 (336 aa).

An N-terminal signal peptide occupies residues 1 to 28 (MAMARSRRDSVWKYCWGLLMVLCRTAIS). At 29-232 (RSIVLEPIYW…LLGSEVALFA (204 aa)) the chain is on the extracellular side. The 137-residue stretch at 31–167 (IVLEPIYWNS…TRAMKILMKV (137 aa)) folds into the Ephrin RBD domain. The N-linked (GlcNAc...) asparagine glycan is linked to Asn39. Intrachain disulfides connect Cys65-Cys104 and Cys92-Cys156. The N-linked (GlcNAc...) asparagine glycan is linked to Asn142. The disordered stretch occupies residues 170–216 (DASSAGSARNHGPTRRPELEAGTNGRSSTTSPFVKPNPGSSTDGNSA). Residues 193–216 (NGRSSTTSPFVKPNPGSSTDGNSA) are compositionally biased toward polar residues. A helical transmembrane segment spans residues 233 to 253 (GIASGCIIFIVIIITLVVLLL). At 254-336 (KYRRRHRKHS…QSPANIYYKV (83 aa)) the chain is on the cytoplasmic side. Phosphoserine is present on Ser263. The residue at position 277 (Thr277) is a Phosphothreonine. Arg280 bears the Omega-N-methylarginine mark. Positions 334-336 (YKV) match the PDZ-binding motif.

This sequence belongs to the ephrin family. In terms of assembly, interacts with PDZRN3. Binds to the ephrin receptor EPHA3, EPHA4 and EPHB4. Post-translationally, inducible phosphorylation of tyrosine residues in the cytoplasmic domain. Expressed in inner and outer pillar cells of the organ of Corti (at protein level). Expressed on lateral floor plate cells, specifically on commissural axon segments that have passed through the floor plate. Expressed in cells of the retinal ganglion cell layer during retinal axon guidance to the optic disk. Expressed in myogenic progenitor cells.

It is found in the cell membrane. It localises to the cell junction. The protein resides in the adherens junction. Cell surface transmembrane ligand for Eph receptors, a family of receptor tyrosine kinases which are crucial for migration, repulsion and adhesion during neuronal, vascular and epithelial development. Binds promiscuously Eph receptors residing on adjacent cells, leading to contact-dependent bidirectional signaling into neighboring cells. The signaling pathway downstream of the receptor is referred to as forward signaling while the signaling pathway downstream of the ephrin ligand is referred to as reverse signaling. Binds to receptor tyrosine kinase including EPHA4, EPHA3 and EPHB4. Together with EPHB4 plays a central role in heart morphogenesis and angiogenesis through regulation of cell adhesion and cell migration. EPHB4-mediated forward signaling controls cellular repulsion and segregation from EFNB2-expressing cells. May play a role in constraining the orientation of longitudinally projecting axons. This Mus musculus (Mouse) protein is Ephrin-B2 (Efnb2).